The chain runs to 82 residues: MDPLVASASVLAAALAIGLASLGPGIGQGNASGQAVEGIARQPEAEGKIRGTLLLTLAFMESLTIYGLVIALVLLFANPFAS.

2 helical membrane-spanning segments follow: residues 3 to 23 and 57 to 77; these read PLVASASVLAAALAIGLASLG and LAFMESLTIYGLVIALVLLFA.

Belongs to the ATPase C chain family. In terms of assembly, F-type ATPases have 2 components, F(1) - the catalytic core - and F(0) - the membrane proton channel. F(1) has five subunits: alpha(3), beta(3), gamma(1), delta(1), epsilon(1). F(0) has four main subunits: a(1), b(1), b'(1) and c(10-14). The alpha and beta chains form an alternating ring which encloses part of the gamma chain. F(1) is attached to F(0) by a central stalk formed by the gamma and epsilon chains, while a peripheral stalk is formed by the delta, b and b' chains.

The protein localises to the cellular thylakoid membrane. Its function is as follows. F(1)F(0) ATP synthase produces ATP from ADP in the presence of a proton or sodium gradient. F-type ATPases consist of two structural domains, F(1) containing the extramembraneous catalytic core and F(0) containing the membrane proton channel, linked together by a central stalk and a peripheral stalk. During catalysis, ATP synthesis in the catalytic domain of F(1) is coupled via a rotary mechanism of the central stalk subunits to proton translocation. Key component of the F(0) channel; it plays a direct role in translocation across the membrane. A homomeric c-ring of between 10-14 subunits forms the central stalk rotor element with the F(1) delta and epsilon subunits. This is ATP synthase subunit c from Synechococcus sp. (strain PCC 6716).